Reading from the N-terminus, the 166-residue chain is Crossover junction endodeoxyribonuclease RuvC (166 aa).

Residues aspartate 11, glutamate 70, and aspartate 142 contribute to the active site. Positions 11, 70, and 142 each coordinate Mg(2+).

This sequence belongs to the RuvC family. In terms of assembly, homodimer which binds Holliday junction (HJ) DNA. The HJ becomes 2-fold symmetrical on binding to RuvC with unstacked arms; it has a different conformation from HJ DNA in complex with RuvA. In the full resolvosome a probable DNA-RuvA(4)-RuvB(12)-RuvC(2) complex forms which resolves the HJ. Mg(2+) serves as cofactor.

It is found in the cytoplasm. The enzyme catalyses Endonucleolytic cleavage at a junction such as a reciprocal single-stranded crossover between two homologous DNA duplexes (Holliday junction).. Its function is as follows. The RuvA-RuvB-RuvC complex processes Holliday junction (HJ) DNA during genetic recombination and DNA repair. Endonuclease that resolves HJ intermediates. Cleaves cruciform DNA by making single-stranded nicks across the HJ at symmetrical positions within the homologous arms, yielding a 5'-phosphate and a 3'-hydroxyl group; requires a central core of homology in the junction. The consensus cleavage sequence is 5'-(A/T)TT(C/G)-3'. Cleavage occurs on the 3'-side of the TT dinucleotide at the point of strand exchange. HJ branch migration catalyzed by RuvA-RuvB allows RuvC to scan DNA until it finds its consensus sequence, where it cleaves and resolves the cruciform DNA. In Nitratidesulfovibrio vulgaris (strain ATCC 29579 / DSM 644 / CCUG 34227 / NCIMB 8303 / VKM B-1760 / Hildenborough) (Desulfovibrio vulgaris), this protein is Crossover junction endodeoxyribonuclease RuvC.